Consider the following 95-residue polypeptide: Translation initiation factor IF-1 (95 aa).

The region spanning 1-72 is the S1-like domain; it reads MAKEELIEMD…TKARITYRHK (72 aa). The interval 70–95 is disordered; that stretch reads RHKVGGPPGPVTGGGNRPPPRQPRRR. The segment covering 86–95 has biased composition (pro residues); that stretch reads RPPPRQPRRR.

The protein belongs to the IF-1 family. In terms of assembly, component of the 30S ribosomal translation pre-initiation complex which assembles on the 30S ribosome in the order IF-2 and IF-3, IF-1 and N-formylmethionyl-tRNA(fMet); mRNA recruitment can occur at any time during PIC assembly.

It localises to the cytoplasm. In terms of biological role, one of the essential components for the initiation of protein synthesis. Stabilizes the binding of IF-2 and IF-3 on the 30S subunit to which N-formylmethionyl-tRNA(fMet) subsequently binds. Helps modulate mRNA selection, yielding the 30S pre-initiation complex (PIC). Upon addition of the 50S ribosomal subunit IF-1, IF-2 and IF-3 are released leaving the mature 70S translation initiation complex. This chain is Translation initiation factor IF-1, found in Rhodospirillum rubrum (strain ATCC 11170 / ATH 1.1.1 / DSM 467 / LMG 4362 / NCIMB 8255 / S1).